A 906-amino-acid chain; its full sequence is Protein translocase subunit SecA (906 aa).

ATP contacts are provided by residues Gln-87, 105 to 109 (GEGKT), and Asp-521. The segment covering 849–865 (STATAAEPAPEASQSQS) has biased composition (low complexity). The segment at 849–897 (STATAAEPAPEASQSQSTNDATASQNPPITEVEASKVGRNQPCPCGSGK) is disordered. Positions 866 to 876 (TNDATASQNPP) are enriched in polar residues. Positions 891, 893, 902, and 903 each coordinate Zn(2+).

This sequence belongs to the SecA family. In terms of assembly, monomer and homodimer. Part of the essential Sec protein translocation apparatus which comprises SecA, SecYEG and auxiliary proteins SecDF-YajC and YidC. The cofactor is Zn(2+).

It is found in the cell inner membrane. The protein resides in the cytoplasm. The enzyme catalyses ATP + H2O + cellular proteinSide 1 = ADP + phosphate + cellular proteinSide 2.. Functionally, part of the Sec protein translocase complex. Interacts with the SecYEG preprotein conducting channel. Has a central role in coupling the hydrolysis of ATP to the transfer of proteins into and across the cell membrane, serving both as a receptor for the preprotein-SecB complex and as an ATP-driven molecular motor driving the stepwise translocation of polypeptide chains across the membrane. The protein is Protein translocase subunit SecA of Dichelobacter nodosus (strain VCS1703A).